The following is a 196-amino-acid chain: Rho-related GTP-binding protein RhoB (196 aa).

GTP is bound at residue 12–19 (GDGACGKT). Tyr-34 is a glycosylation site (O-linked (GlcNAc) tyrosine; by Photorhabdus PAU_02230). The Effector region motif lies at 34–42 (YVPTVFENY). (Microbial infection) O-linked (Glc) threonine; by C.difficile toxins TcdA and TcdB glycosylation occurs at Thr-37. Residue Asn-41 is modified to ADP-ribosylasparagine; by botulinum toxin. Residues 59–63 (DTAGQ) and 117–120 (NKKD) contribute to the GTP site. Tyr-154 carries the phosphotyrosine modification. 2 S-palmitoyl cysteine lipidation sites follow: Cys-189 and Cys-192. Cys-193 carries the cysteine methyl ester modification. Residue Cys-193 is the site of S-farnesyl cysteine; in plasma membrane form attachment. Cys-193 carries S-geranylgeranyl cysteine; in endosomal form lipidation. The propeptide at 194-196 (KVL) is removed in mature form.

The protein belongs to the small GTPase superfamily. Rho family. As to quaternary structure, binds ROCK1 and ROCK2. Also binds PKN1/PRK1. Interacts with ARGGEF3. Interacts with RTKN. Interacts with AKAP13. Interacts with RIPOR1. Prenylation specifies the subcellular location of RHOB. The farnesylated form is localized to the plasma membrane while the geranylgeranylated form is localized to the endosome. In terms of processing, (Microbial infection) Glycosylated at Tyr-34 by Photorhabdus asymbiotica toxin PAU_02230. Mono-O-GlcNAcylation by PAU_02230 inhibits downstream signaling by an impaired interaction with diverse regulator and effector proteins of Rho and leads to actin disassembly. Post-translationally, (Microbial infection) Glucosylated at Thr-37 by C.difficile toxins TcdA and TcdB in the colonic epithelium. Monoglucosylation completely prevents the recognition of the downstream effector, blocking the GTPases in their inactive form, leading to actin cytoskeleton disruption.

The protein resides in the late endosome membrane. Its subcellular location is the cell membrane. It is found in the nucleus. It localises to the cleavage furrow. Functionally, mediates apoptosis in neoplastically transformed cells after DNA damage. Not essential for development but affects cell adhesion and growth factor signaling in transformed cells. Plays a negative role in tumorigenesis as deletion causes tumor formation. Involved in intracellular protein trafficking of a number of proteins. Targets PKN1 to endosomes and is involved in trafficking of the EGF receptor from late endosomes to lysosomes. Also required for stability and nuclear trafficking of AKT1/AKT which promotes endothelial cell survival during vascular development. Serves as a microtubule-dependent signal that is required for the myosin contractile ring formation during cell cycle cytokinesis. Required for genotoxic stress-induced cell death in breast cancer cells. This chain is Rho-related GTP-binding protein RhoB (RHOB), found in Homo sapiens (Human).